The sequence spans 247 residues: tRNA (guanine-N(7)-)-methyltransferase (247 aa).

Residues Gly70, 93-94, 128-129, and Leu148 each bind S-adenosyl-L-methionine; these read EI and NA. Residue Asp151 is part of the active site. S-adenosyl-L-methionine is bound at residue 226–228; that stretch reads SEE.

The protein belongs to the class I-like SAM-binding methyltransferase superfamily. TrmB family.

Its subcellular location is the nucleus. It catalyses the reaction guanosine(46) in tRNA + S-adenosyl-L-methionine = N(7)-methylguanosine(46) in tRNA + S-adenosyl-L-homocysteine. It functions in the pathway tRNA modification; N(7)-methylguanine-tRNA biosynthesis. Its function is as follows. Catalyzes the formation of N(7)-methylguanine at position 46 (m7G46) in tRNA. The protein is tRNA (guanine-N(7)-)-methyltransferase of Drosophila persimilis (Fruit fly).